Reading from the N-terminus, the 216-residue chain is Adenylate kinase (216 aa).

Position 10–15 (G10–T15) interacts with ATP. Positions S30–V59 are NMP. AMP-binding positions include T31, R36, E57 to V59, G85 to R88, and Q92. An LID region spans residues G126–D164. R127 is an ATP binding site. Residues C130 and C133 each contribute to the Zn(2+) site. T136–Y137 lines the ATP pocket. Residues C150 and C153 each coordinate Zn(2+). 2 residues coordinate AMP: R161 and R172. An ATP-binding site is contributed by R200.

It belongs to the adenylate kinase family. As to quaternary structure, monomer.

The protein resides in the cytoplasm. The enzyme catalyses AMP + ATP = 2 ADP. It participates in purine metabolism; AMP biosynthesis via salvage pathway; AMP from ADP: step 1/1. Catalyzes the reversible transfer of the terminal phosphate group between ATP and AMP. Plays an important role in cellular energy homeostasis and in adenine nucleotide metabolism. This Enterococcus faecalis (strain ATCC 700802 / V583) protein is Adenylate kinase.